The primary structure comprises 356 residues: Trans-enoyl reductase pgmF (356 aa).

NADP(+) contacts are provided by residues 57 to 60 (VDFK), 175 to 178 (SGGC), 198 to 201 (STPN), Tyr-216, 261 to 262 (VG), and 342 to 343 (AK).

It belongs to the zinc-containing alcohol dehydrogenase family.

Functionally, FAD-linked oxidoreductase; part of the gene cluster that mediates the biosynthesis of pleosporalin A, ascomycone A, as well as a third cryptic naphthoquinone derived pigment, all responsible for the coloration of conidia. The pathway begins with the biosynthesis of the cyclized heptaketide 3-acetonyl-1,6,8-trihydroxy-2-naphthaldehyde by the NR-PKS pgmA. The C-6 hydroxyl group is further methylated by the O-methyltransferase pgmB to yield fusarubinaldehyde which is in turn oxidized by the cytochrome P450 monooxygenase pgmC at C-9. The C-1 hydroxyl group is then methylated spontaneously. Although pgmE, pgmD and pgmH are essential for the production of pleosporalin A, it is not the case for the 2 other final products and it remains difficult to assign a specific function to each enzyme. PgmF and pgmG seem not to be involved in pigment biosynthesis although they were regulated by the cluster-specific transcription factor pgmR. In Aspergillus terreus (strain NIH 2624 / FGSC A1156), this protein is Trans-enoyl reductase pgmF.